The sequence spans 346 residues: tRNA N6-adenosine threonylcarbamoyltransferase (346 aa).

Fe cation-binding residues include histidine 117 and histidine 121. Substrate contacts are provided by residues 139-143 (VVSGG), aspartate 172, glycine 185, aspartate 189, and asparagine 278. Aspartate 307 contributes to the Fe cation binding site.

This sequence belongs to the KAE1 / TsaD family. As to quaternary structure, may form a heterodimer with TsaB. Requires Fe(2+) as cofactor.

The protein localises to the cytoplasm. The enzyme catalyses L-threonylcarbamoyladenylate + adenosine(37) in tRNA = N(6)-L-threonylcarbamoyladenosine(37) in tRNA + AMP + H(+). Required for the formation of a threonylcarbamoyl group on adenosine at position 37 (t(6)A37) in tRNAs that read codons beginning with adenine. Is involved in the transfer of the threonylcarbamoyl moiety of threonylcarbamoyl-AMP (TC-AMP) to the N6 group of A37, together with TsaE and TsaB; this reaction does not require ATP in vitro. TsaD likely plays a direct catalytic role in this reaction. This chain is tRNA N6-adenosine threonylcarbamoyltransferase, found in Bacillus subtilis (strain 168).